Here is a 358-residue protein sequence, read N- to C-terminus: Probable undecaprenyl-phosphate N-acetylglucosaminyl 1-phosphate transferase (358 aa).

The next 11 membrane-spanning stretches (helical) occupy residues 10–32, 53–72, 76–93, 105–127, 137–157, 164–181, 186–205, 218–235, 240–262, 292–311, and 316–338; these read VVAFIVSLLTVLIITPIVKRIAI, MGGLAIFIGVVAGVLASGIY, RMTAITVGAFIIIVLGIL, FLIQLGVAIMIVSTGLKMDFFSV, GWMAYPLTVLWIVGITNAINL, LAAGLSVIGLSTIAVMAL, VLILSLSLVVIASTLGFLFY, GSLFLGYSISILSLLGLY, LFSIVIPIIILGVPIFDTTFAII, MSVLVIYLIGFIFSISAIVL, and IWLSLFIIFILIIFMQIIAEVTG.

The protein belongs to the glycosyltransferase 4 family. Requires Mg(2+) as cofactor. Mn(2+) serves as cofactor.

The protein localises to the cell membrane. The catalysed reaction is di-trans,octa-cis-undecaprenyl phosphate + UDP-N-acetyl-alpha-D-glucosamine = N-acetyl-alpha-D-glucosaminyl-di-trans,octa-cis-undecaprenyl diphosphate + UMP. Its pathway is cell wall biogenesis; poly(glucopyranosyl N-acetylgalactosamine 1-phosphate) teichoic acid biosynthesis. The protein operates within cell wall biogenesis; poly(glycerol phosphate) teichoic acid biosynthesis. Its function is as follows. Catalyzes the formation of undecaprenyl-PP-N-acetylglucosamine. Involved in the synthesis of anionic cell-wall polymers as it mediates the initiation of the linkage unit formation that appears to be common to the two types of teichoic acids attached to the peptidoglycan of B.subtilis; may also be involved in teichuronic acid biosynthesis. This is Probable undecaprenyl-phosphate N-acetylglucosaminyl 1-phosphate transferase (tagO) from Bacillus subtilis (strain 168).